A 341-amino-acid chain; its full sequence is UDP-3-O-acylglucosamine N-acyltransferase (341 aa).

His-236 acts as the Proton acceptor in catalysis.

Belongs to the transferase hexapeptide repeat family. LpxD subfamily. Homotrimer.

It catalyses the reaction a UDP-3-O-[(3R)-3-hydroxyacyl]-alpha-D-glucosamine + a (3R)-hydroxyacyl-[ACP] = a UDP-2-N,3-O-bis[(3R)-3-hydroxyacyl]-alpha-D-glucosamine + holo-[ACP] + H(+). It functions in the pathway bacterial outer membrane biogenesis; LPS lipid A biosynthesis. Catalyzes the N-acylation of UDP-3-O-acylglucosamine using 3-hydroxyacyl-ACP as the acyl donor. Is involved in the biosynthesis of lipid A, a phosphorylated glycolipid that anchors the lipopolysaccharide to the outer membrane of the cell. In Lawsonia intracellularis (strain PHE/MN1-00), this protein is UDP-3-O-acylglucosamine N-acyltransferase.